A 500-amino-acid polypeptide reads, in one-letter code: MGSIDSTNVAMSNSPVGEFKPLEAEEFRKQAHRMVDFIADYYKNVETYPVLSEVEPGYLRKRIPETAPYLPEPLDDIMKDIQKDIIPGMTNWMSPNFYAFFPATVSSAAFLGEMLSTALNSVGFTWVSSPAATELEMIVMDWLAQILKLPKSFMFSGTGGGVIQNTTSESILCTIIAARERALEKLGPDSIGKLVCYGSDQTHTMFPKTCKLAGIYPNNIRLIPTTVETDFGISPQVLRKMVEDDVAAGYVPLFLCATLGTTSTTATDPVDSLSEIANEFGIWIHVDAAYAGSACICPEFRHYLDGIERVDSLSLSPHKWLLAYLDCTCLWVKQPHLLLRALTTNPEYLKNKQSDLDKVVDFKNWQIATGRKFRSLKLWLILRSYGVVNLQSHIRSDVAMGKMFEEWVRSDSRFEIVVPRNFSLVCFRLKPDVSSLHVEEVNKKLLDMLNSTGRVYMTHTIVGGIYMLRLAVGSSLTEEHHVRRVWDLIQKLTDDLLKEA.

Pro-102 contributes to the L-tryptophan binding site. A pyridoxal 5'-phosphate-binding site is contributed by Ser-168. His-203 contacts L-tryptophan. A pyridoxal 5'-phosphate-binding site is contributed by Thr-262. His-318 serves as a coordination point for L-tryptophan. N6-(pyridoxal phosphate)lysine is present on Lys-319. Tyr-348 lines the L-tryptophan pocket.

The protein belongs to the group II decarboxylase family. In terms of assembly, homodimer. Pyridoxal 5'-phosphate is required as a cofactor.

It carries out the reaction L-tryptophan + H(+) = tryptamine + CO2. The catalysed reaction is 5-hydroxy-L-tryptophan + H(+) = serotonin + CO2. Functionally, catalyzes the decarboxylation of L-tryptophan to tryptamine and L-5-hydroxytryptophan to serotonin, respectively. The chain is Aromatic-L-amino-acid decarboxylase from Catharanthus roseus (Madagascar periwinkle).